The primary structure comprises 1424 residues: DNA-directed RNA polymerase subunit beta' (1424 aa).

Positions 60, 62, 75, and 78 each coordinate Zn(2+). The Mg(2+) site is built by D449, D451, and D453. C783, C857, C864, and C867 together coordinate Zn(2+).

The protein belongs to the RNA polymerase beta' chain family. As to quaternary structure, the RNAP catalytic core consists of 2 alpha, 1 beta, 1 beta' and 1 omega subunit. When a sigma factor is associated with the core the holoenzyme is formed, which can initiate transcription. Requires Mg(2+) as cofactor. Zn(2+) serves as cofactor.

The enzyme catalyses RNA(n) + a ribonucleoside 5'-triphosphate = RNA(n+1) + diphosphate. Its function is as follows. DNA-dependent RNA polymerase catalyzes the transcription of DNA into RNA using the four ribonucleoside triphosphates as substrates. The polypeptide is DNA-directed RNA polymerase subunit beta' (Treponema denticola (strain ATCC 35405 / DSM 14222 / CIP 103919 / JCM 8153 / KCTC 15104)).